Here is a 326-residue protein sequence, read N- to C-terminus: 4-hydroxythreonine-4-phosphate dehydrogenase (326 aa).

T132 serves as a coordination point for substrate. A divalent metal cation is bound by residues H160, H205, and H260. K268, N277, and R286 together coordinate substrate.

Belongs to the PdxA family. As to quaternary structure, homodimer. Zn(2+) is required as a cofactor. Mg(2+) serves as cofactor. It depends on Co(2+) as a cofactor.

The protein resides in the cytoplasm. The enzyme catalyses 4-(phosphooxy)-L-threonine + NAD(+) = 3-amino-2-oxopropyl phosphate + CO2 + NADH. The protein operates within cofactor biosynthesis; pyridoxine 5'-phosphate biosynthesis; pyridoxine 5'-phosphate from D-erythrose 4-phosphate: step 4/5. Its function is as follows. Catalyzes the NAD(P)-dependent oxidation of 4-(phosphooxy)-L-threonine (HTP) into 2-amino-3-oxo-4-(phosphooxy)butyric acid which spontaneously decarboxylates to form 3-amino-2-oxopropyl phosphate (AHAP). This chain is 4-hydroxythreonine-4-phosphate dehydrogenase, found in Stenotrophomonas maltophilia (strain R551-3).